The chain runs to 243 residues: Carboxy-S-adenosyl-L-methionine synthase (243 aa).

S-adenosyl-L-methionine contacts are provided by residues Tyr-35, 68–70 (GCS), 92–93 (DN), and Arg-199.

Belongs to the class I-like SAM-binding methyltransferase superfamily. Cx-SAM synthase family. As to quaternary structure, homodimer.

It carries out the reaction prephenate + S-adenosyl-L-methionine = carboxy-S-adenosyl-L-methionine + 3-phenylpyruvate + H2O. In terms of biological role, catalyzes the conversion of S-adenosyl-L-methionine (SAM) to carboxy-S-adenosyl-L-methionine (Cx-SAM). The chain is Carboxy-S-adenosyl-L-methionine synthase from Helicobacter pylori (strain P12).